The sequence spans 889 residues: DNA gyrase subunit A (889 aa).

A Topo IIA-type catalytic domain is found at 35 to 501; the sequence is LPDVRDGLKP…GFEDLEDEDL (467 aa). The active-site O-(5'-phospho-DNA)-tyrosine intermediate is Y123. Residues 528–534 carry the GyrA-box motif; it reads QNRGGRG. The disordered stretch occupies residues 811–889; the sequence is KEDAEDETNE…IQQSLDEDEE (79 aa). Positions 813–823 are enriched in acidic residues; the sequence is DAEDETNEDEQ. Basic and acidic residues predominate over residues 863–875; it reads DGRIEVRQDFMDR. Over residues 876-889 the composition is skewed to acidic residues; sequence VEEDIQQSLDEDEE.

It belongs to the type II topoisomerase GyrA/ParC subunit family. Heterotetramer, composed of two GyrA and two GyrB chains. In the heterotetramer, GyrA contains the active site tyrosine that forms a transient covalent intermediate with DNA, while GyrB binds cofactors and catalyzes ATP hydrolysis.

It localises to the cytoplasm. The catalysed reaction is ATP-dependent breakage, passage and rejoining of double-stranded DNA.. Functionally, a type II topoisomerase that negatively supercoils closed circular double-stranded (ds) DNA in an ATP-dependent manner to modulate DNA topology and maintain chromosomes in an underwound state. Negative supercoiling favors strand separation, and DNA replication, transcription, recombination and repair, all of which involve strand separation. Also able to catalyze the interconversion of other topological isomers of dsDNA rings, including catenanes and knotted rings. Type II topoisomerases break and join 2 DNA strands simultaneously in an ATP-dependent manner. The chain is DNA gyrase subunit A from Staphylococcus aureus.